Reading from the N-terminus, the 42-residue chain is Potassium channel toxin gamma-KTx 1.6 (42 aa).

Intrachain disulfides connect cysteine 5-cysteine 23, cysteine 11-cysteine 34, cysteine 20-cysteine 39, and cysteine 24-cysteine 41.

The protein belongs to the ergtoxin family. Gamma-KTx 1 subfamily. As to expression, expressed by the venom gland.

The protein resides in the secreted. Blocks Kv11/ERG potassium channels. The protein is Potassium channel toxin gamma-KTx 1.6 of Centruroides exilicauda (Bark scorpion).